A 148-amino-acid polypeptide reads, in one-letter code: MFDVTLLILLGLAALGFISHNTTVAVSILVLIIVRVTPLSTFFPWIEKQGLSIGIIILTIGVMAPIASGTLPPSTLIHSFLNWKSLVAIAVGVIVSWLGGRGVTLMGSQPQLVAGLLVGTVLGVALFRGVPVGPLIAAGLVSLIVGKQ.

Transmembrane regions (helical) follow at residues 14–34 (ALGF…LIIV), 51–71 (LSIG…SGTL), 86–106 (LVAI…VTLM), and 121–141 (VLGV…AGLV).

Belongs to the UPF0756 family.

The protein resides in the cell membrane. The protein is UPF0756 membrane protein YeaL of Shigella flexneri.